We begin with the raw amino-acid sequence, 700 residues long: Probable pre-mRNA-splicing factor ATP-dependent RNA helicase DEAH4 (700 aa).

Alanine 2 is subject to N-acetylalanine. Positions 14 to 178 (VETVEKNSVV…FSGCPVLNVP (165 aa)) constitute a Helicase ATP-binding domain. 27–34 (GETGSGKS) contacts ATP. The DEAH box signature appears at 124 to 127 (DEAH). The Helicase C-terminal domain occupies 200 to 377 (SLKVAIDIHV…GSVLYLKSLD (178 aa)). Disordered stretches follow at residues 463–486 (PARS…NGSG) and 654–682 (GPAP…SENV).

The protein belongs to the DEAD box helicase family. DEAH subfamily. PRP22 sub-subfamily.

It catalyses the reaction ATP + H2O = ADP + phosphate + H(+). May be involved in pre-mRNA splicing. The protein is Probable pre-mRNA-splicing factor ATP-dependent RNA helicase DEAH4 of Arabidopsis thaliana (Mouse-ear cress).